The primary structure comprises 302 residues: Aspartate carbamoyltransferase catalytic subunit (302 aa).

Carbamoyl phosphate-binding residues include Arg-49 and Thr-50. Position 77 (Lys-77) interacts with L-aspartate. Arg-99, His-126, and Gln-129 together coordinate carbamoyl phosphate. Positions 159 and 209 each coordinate L-aspartate. Carbamoyl phosphate contacts are provided by Ala-250 and Pro-251.

The protein belongs to the aspartate/ornithine carbamoyltransferase superfamily. ATCase family. As to quaternary structure, heterododecamer (2C3:3R2) of six catalytic PyrB chains organized as two trimers (C3), and six regulatory PyrI chains organized as three dimers (R2).

It carries out the reaction carbamoyl phosphate + L-aspartate = N-carbamoyl-L-aspartate + phosphate + H(+). Its pathway is pyrimidine metabolism; UMP biosynthesis via de novo pathway; (S)-dihydroorotate from bicarbonate: step 2/3. Functionally, catalyzes the condensation of carbamoyl phosphate and aspartate to form carbamoyl aspartate and inorganic phosphate, the committed step in the de novo pyrimidine nucleotide biosynthesis pathway. The polypeptide is Aspartate carbamoyltransferase catalytic subunit (Staphylococcus carnosus (strain TM300)).